The sequence spans 350 residues: Small ribosomal subunit biogenesis GTPase RsgA (350 aa).

Residues 1-17 show a composition bias toward polar residues; that stretch reads MSKNKLSKGQQRRVNAN. Residues 1 to 33 form a disordered region; that stretch reads MSKNKLSKGQQRRVNANHQRRLKTSKEKPDYDD. The region spanning 104 to 273 is the CP-type G domain; sequence TSVLTRPDFY…VIDSPGVREF (170 aa). GTP-binding positions include 160 to 163 and 214 to 222; these read NKID and GQSGVGKSS. Zn(2+) is bound by residues C297, C302, H304, and C310.

It belongs to the TRAFAC class YlqF/YawG GTPase family. RsgA subfamily. Monomer. Associates with 30S ribosomal subunit, binds 16S rRNA. Zn(2+) serves as cofactor.

It is found in the cytoplasm. Its function is as follows. One of several proteins that assist in the late maturation steps of the functional core of the 30S ribosomal subunit. Helps release RbfA from mature subunits. May play a role in the assembly of ribosomal proteins into the subunit. Circularly permuted GTPase that catalyzes slow GTP hydrolysis, GTPase activity is stimulated by the 30S ribosomal subunit. The polypeptide is Small ribosomal subunit biogenesis GTPase RsgA (Escherichia fergusonii (strain ATCC 35469 / DSM 13698 / CCUG 18766 / IAM 14443 / JCM 21226 / LMG 7866 / NBRC 102419 / NCTC 12128 / CDC 0568-73)).